The chain runs to 220 residues: NADH-quinone oxidoreductase subunit I (220 aa).

2 consecutive 4Fe-4S ferredoxin-type domains span residues 71 to 102 (LQRL…IITH) and 112 to 141 (DSYT…MGNR). The [4Fe-4S] cluster site is built by C82, C85, C88, C92, C121, C124, C127, and C131. The segment at 187-220 (MQATPLDYVQEPSKEESKEETPTNPESNKGDENV) is disordered. Over residues 198–207 (PSKEESKEET) the composition is skewed to basic and acidic residues.

The protein belongs to the complex I 23 kDa subunit family. In terms of assembly, NDH-1 is composed of 14 different subunits. Subunits NuoA, H, J, K, L, M, N constitute the membrane sector of the complex. Requires [4Fe-4S] cluster as cofactor.

The protein localises to the cell inner membrane. It carries out the reaction a quinone + NADH + 5 H(+)(in) = a quinol + NAD(+) + 4 H(+)(out). Its function is as follows. NDH-1 shuttles electrons from NADH, via FMN and iron-sulfur (Fe-S) centers, to quinones in the respiratory chain. The immediate electron acceptor for the enzyme in this species is believed to be ubiquinone. Couples the redox reaction to proton translocation (for every two electrons transferred, four hydrogen ions are translocated across the cytoplasmic membrane), and thus conserves the redox energy in a proton gradient. The sequence is that of NADH-quinone oxidoreductase subunit I from Helicobacter pylori (strain Shi470).